Consider the following 301-residue polypeptide: Aquaporin NIP2-3 (301 aa).

A run of 2 helical transmembrane segments spans residues 57 to 77 (VISE…AASI) and 91 to 111 (SVAG…ISGA). The NPA 1 signature appears at 114–116 (NPA). 3 helical membrane passes run 132–154 (VPFY…KAVL), 172–192 (ALAI…AVAT), and 200–220 (LAGL…GPVS). The NPA 2 signature appears at 225–227 (NPA). Residues 238–258 (VFTGLWIYFLGPVVGTLSGAW) form a helical membrane-spanning segment.

The protein belongs to the MIP/aquaporin (TC 1.A.8) family. NIP (TC 1.A.8.12) subfamily.

It is found in the membrane. Functionally, aquaporins facilitate the transport of water and small neutral solutes across cell membranes. The chain is Aquaporin NIP2-3 (NIP2-3) from Zea mays (Maize).